A 607-amino-acid polypeptide reads, in one-letter code: Elongation factor 4 (607 aa).

A tr-type G domain is found at 11-193 (EKIRNFSIIA…QIVEKVPAPT (183 aa)). GTP-binding positions include 23–28 (DHGKST) and 140–143 (NKID).

The protein belongs to the TRAFAC class translation factor GTPase superfamily. Classic translation factor GTPase family. LepA subfamily.

It localises to the cell membrane. It carries out the reaction GTP + H2O = GDP + phosphate + H(+). Required for accurate and efficient protein synthesis under certain stress conditions. May act as a fidelity factor of the translation reaction, by catalyzing a one-codon backward translocation of tRNAs on improperly translocated ribosomes. Back-translocation proceeds from a post-translocation (POST) complex to a pre-translocation (PRE) complex, thus giving elongation factor G a second chance to translocate the tRNAs correctly. Binds to ribosomes in a GTP-dependent manner. The chain is Elongation factor 4 from Streptococcus pneumoniae (strain P1031).